The primary structure comprises 507 residues: ATP synthase subunit alpha (507 aa).

170–177 is an ATP binding site; it reads GDRQTGKT.

This sequence belongs to the ATPase alpha/beta chains family. As to quaternary structure, F-type ATPases have 2 components, CF(1) - the catalytic core - and CF(0) - the membrane proton channel. CF(1) has five subunits: alpha(3), beta(3), gamma(1), delta(1), epsilon(1). CF(0) has three main subunits: a(1), b(2) and c(9-12). The alpha and beta chains form an alternating ring which encloses part of the gamma chain. CF(1) is attached to CF(0) by a central stalk formed by the gamma and epsilon chains, while a peripheral stalk is formed by the delta and b chains.

It is found in the cell inner membrane. It catalyses the reaction ATP + H2O + 4 H(+)(in) = ADP + phosphate + 5 H(+)(out). Its function is as follows. Produces ATP from ADP in the presence of a proton gradient across the membrane. The alpha chain is a regulatory subunit. In Thermosipho africanus (strain TCF52B), this protein is ATP synthase subunit alpha.